The sequence spans 541 residues: Chaperonin GroEL (541 aa).

ATP contacts are provided by residues 29 to 32 (TLGP), 86 to 90 (DGTTT), Gly413, 476 to 478 (NAA), and Asp492. The disordered stretch occupies residues 521-541 (KPEENAPAAPAAPNPGMGGMM). Residues 525–535 (NAPAAPAAPNP) show a composition bias toward low complexity.

It belongs to the chaperonin (HSP60) family. In terms of assembly, forms a cylinder of 14 subunits composed of two heptameric rings stacked back-to-back. Interacts with the co-chaperonin GroES.

Its subcellular location is the cytoplasm. The enzyme catalyses ATP + H2O + a folded polypeptide = ADP + phosphate + an unfolded polypeptide.. Functionally, together with its co-chaperonin GroES, plays an essential role in assisting protein folding. The GroEL-GroES system forms a nano-cage that allows encapsulation of the non-native substrate proteins and provides a physical environment optimized to promote and accelerate protein folding. This Lactiplantibacillus plantarum (strain ATCC BAA-793 / NCIMB 8826 / WCFS1) (Lactobacillus plantarum) protein is Chaperonin GroEL.